The following is a 369-amino-acid chain: P2X receptor B (369 aa).

The Cytoplasmic portion of the chain corresponds to 1–25; it reads MTIDWDSILSYNTIKVVRIRDRRLG. A helical transmembrane segment spans residues 26 to 46; that stretch reads ILHLCFLIVIVLYVVVYSAII. The Lumenal portion of the chain corresponds to 47 to 369; sequence KKGYVTTEEP…DKLYHNIEAL (323 aa). Positions 283-296 are pore-forming motif; it reads RHAIRLIFIQTGVI.

This sequence belongs to the P2X receptor family.

The protein localises to the contractile vacuole membrane. Its function is as follows. P2X receptors are ATP-gated ion channels that play a role in intracellular calcium signaling. Not required for the purinergic response to extracellular nucleotides. Not essential for osmoregulation. Inward currents are evoked by intracellular ATP and ATP analogs. Insensitive to the P2 receptor antagonists PPADS and suramin, and also copper ions. Inhibited by sodium ions. Permeable to chloride ions. This Dictyostelium discoideum (Social amoeba) protein is P2X receptor B (p2xB).